Consider the following 482-residue polypeptide: 3-isopropylmalate dehydratase large subunit (482 aa).

[4Fe-4S] cluster contacts are provided by Cys353, Cys414, and Cys417.

This sequence belongs to the aconitase/IPM isomerase family. LeuC type 1 subfamily. Heterodimer of LeuC and LeuD. [4Fe-4S] cluster is required as a cofactor.

The enzyme catalyses (2R,3S)-3-isopropylmalate = (2S)-2-isopropylmalate. It functions in the pathway amino-acid biosynthesis; L-leucine biosynthesis; L-leucine from 3-methyl-2-oxobutanoate: step 2/4. Catalyzes the isomerization between 2-isopropylmalate and 3-isopropylmalate, via the formation of 2-isopropylmaleate. The sequence is that of 3-isopropylmalate dehydratase large subunit from Xanthomonas oryzae pv. oryzae (strain MAFF 311018).